We begin with the raw amino-acid sequence, 286 residues long: Inositol polyphosphate multikinase alpha (286 aa).

The tract at residues 1 to 22 is disordered; sequence MQLKVPEHQVAGHIAKDGKPGP.

Belongs to the inositol phosphokinase (IPK) family. In terms of processing, phosphorylated. In terms of tissue distribution, detected in leaves, stems, roots, siliques and flowers. Highly expressed in root tissues, anthers, the stigma, pollen grains and growing pollen tubes.

It is found in the nucleus. Its subcellular location is the cell membrane. The catalysed reaction is 1D-myo-inositol 1,4,5-trisphosphate + 2 ATP = 1D-myo-inositol 1,3,4,5,6-pentakisphosphate + 2 ADP + 2 H(+). It carries out the reaction 1D-myo-inositol 1,3,4,6-tetrakisphosphate + ATP = 1D-myo-inositol 1,3,4,5,6-pentakisphosphate + ADP + H(+). Functionally, inositol phosphate kinase with a broad substrate specificity. Phosphorylates inositol 1,4,5-trisphosphate (Ins(1,4,5)P3), inositol 1,4,5,6-tetrakisphosphate (Ins(1,4,5,6)P4), inositol 1,3,4,5-tetrakisphosphate (Ins(1,3,4,5)P4), inositol 1,3,4,6-tetrakisphosphate (Ins(1,3,4,6)P4) and inositol 1,2,3,4,6-pentakisphosphate (Ins(1,2,3,4,6)P5) but not inositol 1,4-bisphosphate (Ins(1,4)P2), inositol 1,3,4-trisphosphate (Ins(1,3,4)P3), inositol 1,2,6-trisphosphate (Ins(1,2,6)P3), inositol 3,4,5,6-tetrakisphosphate (Ins(3,4,5,6)P4), inositol 1,3,4,5,6-pentakisphosphate (Ins(1,3,4,5,6)P5), inositol 1,2,4,5,6-pentakisphosphate (Ins(1,2,4,5,6)P5) or inositol hexakisphosphate (InsP6). Regulates pollen and root development probably through the regulation of InsP3-mediated calcium accumulation. The protein is Inositol polyphosphate multikinase alpha (IPK2a) of Arabidopsis thaliana (Mouse-ear cress).